The sequence spans 212 residues: B3 domain-containing protein Os04g0386900 (212 aa).

The tract at residues 1-78 (MRAATALPSI…PRPPEPEPEK (78 aa)) is disordered. Composition is skewed to low complexity over residues 8-23 (PSIPSSSSPSPMASDP) and 36-46 (DAGAEDPAAVD). The segment at residues 93-191 (FTCIMCKSHV…EFRVQVLRAE (99 aa)) is a DNA-binding region (TF-B3).

It localises to the nucleus. In Oryza sativa subsp. japonica (Rice), this protein is B3 domain-containing protein Os04g0386900.